The primary structure comprises 795 residues: Phenylalanine--tRNA ligase beta subunit (795 aa).

One can recognise a tRNA-binding domain in the interval 39–148 (AGVFDGVKVG…ENAPIGMDFR (110 aa)). The region spanning 401–476 (PKPNQVALRR…RIYGYNNIPN (76 aa)) is the B5 domain. Positions 454, 460, 463, and 464 each coordinate Mg(2+). The FDX-ACB domain occupies 701–794 (SKFPANRRDI…VSAQFGAALR (94 aa)).

Belongs to the phenylalanyl-tRNA synthetase beta subunit family. Type 1 subfamily. Tetramer of two alpha and two beta subunits. Mg(2+) is required as a cofactor.

It localises to the cytoplasm. The enzyme catalyses tRNA(Phe) + L-phenylalanine + ATP = L-phenylalanyl-tRNA(Phe) + AMP + diphosphate + H(+). This chain is Phenylalanine--tRNA ligase beta subunit (pheT), found in Vibrio cholerae serotype O1 (strain ATCC 39315 / El Tor Inaba N16961).